The following is a 276-amino-acid chain: Sulfur carrier protein FdhD (276 aa).

Cysteine 122 (cysteine persulfide intermediate) is an active-site residue. 259-264 (FCRRGR) contacts Mo-bis(molybdopterin guanine dinucleotide).

This sequence belongs to the FdhD family.

It localises to the cytoplasm. Required for formate dehydrogenase (FDH) activity. Acts as a sulfur carrier protein that transfers sulfur from IscS to the molybdenum cofactor prior to its insertion into FDH. The protein is Sulfur carrier protein FdhD of Proteus mirabilis (strain HI4320).